The sequence spans 231 residues: Uracil phosphoribosyltransferase (231 aa).

38–42 (KGLVR) lines the GTP pocket. Residues Arg-87, Arg-112, and 140 to 148 (DPMIATGST) contribute to the 5-phospho-alpha-D-ribose 1-diphosphate site. Residues Ile-203 and 208–210 (GDA) contribute to the uracil site. Asp-209 provides a ligand contact to 5-phospho-alpha-D-ribose 1-diphosphate.

This sequence belongs to the UPRTase family. It depends on Mg(2+) as a cofactor.

It catalyses the reaction UMP + diphosphate = 5-phospho-alpha-D-ribose 1-diphosphate + uracil. Its pathway is pyrimidine metabolism; UMP biosynthesis via salvage pathway; UMP from uracil: step 1/1. Allosterically activated by GTP. Catalyzes the conversion of uracil and 5-phospho-alpha-D-ribose 1-diphosphate (PRPP) to UMP and diphosphate. This is Uracil phosphoribosyltransferase from Methanococcus maripaludis (strain DSM 14266 / JCM 13030 / NBRC 101832 / S2 / LL).